Reading from the N-terminus, the 354-residue chain is Dye-decolorizing peroxidase (354 aa).

The Proton acceptor role is filled by D165. H238 contacts heme. Residues 312 to 335 form a targeting peptide region; it reads GLFFSPTVDFLDDPPPLPAPGTPA. Pro residues predominate over residues 324 to 337; it reads DPPPLPAPGTPAAP. The tract at residues 324–354 is disordered; sequence DPPPLPAPGTPAAPPARNGSLSIGSLKGTTR. A compositionally biased stretch (polar residues) spans 342 to 354; it reads GSLSIGSLKGTTR.

It belongs to the DyP-type peroxidase family. In terms of assembly, found in a complex with type 1 encapsulin, strongly suggesting it is found in a type 1 encapsulin nanocompartment. Homotetramer, presumably also in the type 1 encapsulin nanocompartment. Heme b serves as cofactor.

The protein localises to the encapsulin nanocompartment. It is found in the cell membrane. The enzyme catalyses 2 a phenolic donor + H2O2 = 2 a phenolic radical donor + 2 H2O. Its function is as follows. Cargo protein of a type 1 encapsulin nanocompartment. A heme-dependent peroxidase. This cargo-loaded encapsulin nanocompartment is probably involved in protection against oxidative damage. The chain is Dye-decolorizing peroxidase from Mycolicibacterium paratuberculosis (strain ATCC BAA-968 / K-10) (Mycobacterium paratuberculosis).